A 159-amino-acid chain; its full sequence is MAEKESSKKVTTKKPAATHRRRDGCNSITELKDRNGSSLQAIKKYIATNFDVQMDRQLLFIKRALKSGVEKGKLVQTKGKGAECAGGQGTGVGEGKKEKEKAKLLAQREKARKGXXXXXXXXXXXXXXXXXAAKKVKAAPKKAKKPVKKTTEKKEKKKS.

Disordered stretches follow at residues 1–31 (MAEKESSKKVTTKKPAATHRRRDGCNSITEL), 80–99 (KGAECAGGQGTGVGEGKKEK), and 132–159 (AAKKVKAAPKKAKKPVKKTTEKKEKKKS). Positions 10–22 (VTTKKPAATHRRR) are enriched in basic residues. Residues 12 to 102 (TKKPAATHRR…GEGKKEKEKA (91 aa)) enclose the H15 domain. Gly residues predominate over residues 84 to 93 (CAGGQGTGVG). Positions 134–148 (KKVKAAPKKAKKPVK) are enriched in basic residues. Over residues 149–159 (KTTEKKEKKKS) the composition is skewed to basic and acidic residues.

The protein belongs to the histone H1/H5 family.

The protein resides in the nucleus. The protein localises to the chromosome. In terms of biological role, histones H1 are necessary for the condensation of nucleosome chains into higher-order structures. This chain is Histone H1, found in Psammechinus miliaris (Green sea urchin).